The primary structure comprises 986 residues: Translation initiation factor IF-2 (986 aa).

Residues E49–S59 are compositionally biased toward basic and acidic residues. The interval E49–Y370 is disordered. Positions K60 to T112 are enriched in low complexity. Positions G135–N168 are enriched in basic and acidic residues. Positions Q170–Q182 are enriched in low complexity. Gly residues-rich tracts occupy residues G254–R286 and G296–G353. Residues S357 to K366 show a composition bias toward basic residues. The tr-type G domain occupies P479–D651. The interval G488–T495 is G1. Residue G488–T495 coordinates GTP. The G2 stretch occupies residues G513 to R517. Positions D538 to G541 are G3. GTP is bound by residues D538–H542 and N592–D595. Residues N592–D595 form a G4 region. Residues S628–K630 are G5.

Belongs to the TRAFAC class translation factor GTPase superfamily. Classic translation factor GTPase family. IF-2 subfamily.

It is found in the cytoplasm. One of the essential components for the initiation of protein synthesis. Protects formylmethionyl-tRNA from spontaneous hydrolysis and promotes its binding to the 30S ribosomal subunits. Also involved in the hydrolysis of GTP during the formation of the 70S ribosomal complex. In Bifidobacterium longum subsp. infantis (strain ATCC 15697 / DSM 20088 / JCM 1222 / NCTC 11817 / S12), this protein is Translation initiation factor IF-2.